The sequence spans 445 residues: Ubiquitin carboxyl-terminal hydrolase MINDY-3 (445 aa).

Residue C51 is the Nucleophile of the active site. S125 carries the phosphoserine modification. The active-site Proton acceptor is H287.

The protein belongs to the MINDY deubiquitinase family. FAM188 subfamily. In terms of assembly, interacts with COPS5.

It is found in the nucleus. The catalysed reaction is Thiol-dependent hydrolysis of ester, thioester, amide, peptide and isopeptide bonds formed by the C-terminal Gly of ubiquitin (a 76-residue protein attached to proteins as an intracellular targeting signal).. In terms of biological role, hydrolase that can remove 'Lys-48'-linked conjugated ubiquitin from proteins. The chain is Ubiquitin carboxyl-terminal hydrolase MINDY-3 (MINDY3) from Bos taurus (Bovine).